The sequence spans 298 residues: uncharacterized protein (298 aa).

The next 10 helical transmembrane spans lie at 5–25, 36–56, 76–96, 97–117, 124–144, 147–167, 181–201, 216–236, 244–264, and 272–292; these read ILFG…MSAF, MENV…IYPF, VVVG…ISLA, TATA…PLLL, STLI…DPSV, VGPV…LAYI, VILA…FIDI, ILWI…LTYA, IIAP…LYLG, and SSLG…PALL. The region spanning 17–141 is the EamA 1 domain; the sequence is LCFGIMSAFV…GIVGVVLISD (125 aa). Residues 183–288 form the EamA 2 domain; the sequence is LAFAFGMSLL…ILCSGLLIAL (106 aa).

It belongs to the EamA transporter family.

It localises to the cell membrane. This is an uncharacterized protein from Helicobacter pylori (strain ATCC 700392 / 26695) (Campylobacter pylori).